Reading from the N-terminus, the 219-residue chain is RING-H2 finger protein ATL78 (219 aa).

Residues 57–77 (VMVLSVLLCALVCSLGLNSII) traverse the membrane as a helical segment. The RING-type; atypical zinc-finger motif lies at 131 to 173 (CAICLSEFVAEERVKLLPTCHHGFHVRCIDKWLSSHSSCPTCR).

This sequence belongs to the RING-type zinc finger family. ATL subfamily.

The protein resides in the membrane. The enzyme catalyses S-ubiquitinyl-[E2 ubiquitin-conjugating enzyme]-L-cysteine + [acceptor protein]-L-lysine = [E2 ubiquitin-conjugating enzyme]-L-cysteine + N(6)-ubiquitinyl-[acceptor protein]-L-lysine.. Its pathway is protein modification; protein ubiquitination. This is RING-H2 finger protein ATL78 (ATL78) from Arabidopsis thaliana (Mouse-ear cress).